Here is a 119-residue protein sequence, read N- to C-terminus: Phosphoribosyl-AMP cyclohydrolase (119 aa).

D78 contributes to the Mg(2+) binding site. C79 is a binding site for Zn(2+). Residues D80 and D82 each contribute to the Mg(2+) site. Residues C95 and C102 each contribute to the Zn(2+) site.

Belongs to the PRA-CH family. In terms of assembly, homodimer. It depends on Mg(2+) as a cofactor. Zn(2+) serves as cofactor.

The protein resides in the cytoplasm. The enzyme catalyses 1-(5-phospho-beta-D-ribosyl)-5'-AMP + H2O = 1-(5-phospho-beta-D-ribosyl)-5-[(5-phospho-beta-D-ribosylamino)methylideneamino]imidazole-4-carboxamide. The protein operates within amino-acid biosynthesis; L-histidine biosynthesis; L-histidine from 5-phospho-alpha-D-ribose 1-diphosphate: step 3/9. Catalyzes the hydrolysis of the adenine ring of phosphoribosyl-AMP. The sequence is that of Phosphoribosyl-AMP cyclohydrolase from Jannaschia sp. (strain CCS1).